We begin with the raw amino-acid sequence, 110 residues long: Insulin (110 aa).

The N-terminal stretch at 1 to 23 (MALWLQAFTLLVLLVLSSPGAQS) is a signal peptide. 3 disulfides stabilise this stretch: cysteine 30–cysteine 96, cysteine 42–cysteine 109, and cysteine 95–cysteine 100. The propeptide at 56–87 (DVDPLLGFLSPKSAQENEADEYPYKDQGDLKV) is c peptide.

Belongs to the insulin family. Heterodimer of a B chain and an A chain linked by two disulfide bonds.

The protein resides in the secreted. Insulin decreases blood glucose concentration. It increases cell permeability to monosaccharides, amino acids and fatty acids. It accelerates glycolysis, the pentose phosphate cycle, and glycogen synthesis in liver. The protein is Insulin (ins) of Pantodon buchholzi (Freshwater butterflyfish).